Here is a 225-residue protein sequence, read N- to C-terminus: Methyl-CpG-binding domain-containing protein 6 (225 aa).

The disordered stretch occupies residues 25-92; that stretch reads GDGTLDSSAK…PGWRVEDKIR (68 aa). The MBD domain maps to 71 to 146; the sequence is RKRAAPGDNW…ENTYFNPDHF (76 aa).

In terms of assembly, homodimer and heterodimer with MBD5. Interacts with DDM1 via its MBD domain. Interacts with NTF2, RPS2C, HDA6 and AGO4. In terms of tissue distribution, expressed in rosette leaves, buds, flowers, stems, mature seeds and roots.

It is found in the nucleus. The protein resides in the chromosome. The protein localises to the nucleolus. Functionally, transcriptional regulator that binds CpG, CpNpN and CpNpG (N is A, T, or C) islands in promoters regardless the DNA methylation status. Plays probably a role in gene silencing. May associate with histone deacetylase proteins (HDAC). Required for nucleolar dominance that consist in the silencing of rRNA genes inherited from one progenitor in genetic hybrids. Recruited to rRNA genes in a DRM2-dependent manner. Maintains gene silencing by interacting with RNA binding proteins (e.g. NTF2, RPS2C, HDA6 and AGO4) and by regulating DNA methylation status. The polypeptide is Methyl-CpG-binding domain-containing protein 6 (Arabidopsis thaliana (Mouse-ear cress)).